Consider the following 291-residue polypeptide: Ribonuclease Z (291 aa).

Zn(2+)-binding residues include His61, His63, Asp65, His66, His133, Asp201, and His257. Asp65 (proton acceptor) is an active-site residue.

The protein belongs to the RNase Z family. As to quaternary structure, homodimer. Zn(2+) serves as cofactor.

The catalysed reaction is Endonucleolytic cleavage of RNA, removing extra 3' nucleotides from tRNA precursor, generating 3' termini of tRNAs. A 3'-hydroxy group is left at the tRNA terminus and a 5'-phosphoryl group is left at the trailer molecule.. In terms of biological role, zinc phosphodiesterase, which displays some tRNA 3'-processing endonuclease activity. Probably involved in tRNA maturation, by removing a 3'-trailer from precursor tRNA. The polypeptide is Ribonuclease Z (Saccharolobus solfataricus (strain ATCC 35092 / DSM 1617 / JCM 11322 / P2) (Sulfolobus solfataricus)).